A 160-amino-acid chain; its full sequence is MSDEEHHFESKADAGASKTFPQQAGTIRKNGYIVIKGRPCKVVEVSTSKTGKHGHAKCHFVAIDIFNGKKLEDIVPSSHNCDVPHVNRTDYQLIDISEDGFVSLLTESGNTKDDLRLPTDENLLKQVKDGFQEGKDLVVSVMSAMGEEQINAVKDVGTKN.

The segment covering 1–12 (MSDEEHHFESKA) has biased composition (basic and acidic residues). Positions 1-21 (MSDEEHHFESKADAGASKTFP) are disordered. Residue Lys52 is modified to Hypusine.

The protein belongs to the eIF-5A family. Lys-52 undergoes hypusination, a unique post-translational modification that consists in the addition of a butylamino group from spermidine to lysine side chain, leading to the formation of the unusual amino acid hypusine. eIF-5As are the only known proteins to undergo this modification, which is essential for their function.

Its function is as follows. Translation factor that promotes translation elongation and termination, particularly upon ribosome stalling at specific amino acid sequence contexts. Binds between the exit (E) and peptidyl (P) site of the ribosome and promotes rescue of stalled ribosome: specifically required for efficient translation of polyproline-containing peptides as well as other motifs that stall the ribosome. Acts as a ribosome quality control (RQC) cofactor by joining the RQC complex to facilitate peptidyl transfer during CAT tailing step. The chain is Eukaryotic translation initiation factor 5A-2 from Solanum lycopersicum (Tomato).